Reading from the N-terminus, the 127-residue chain is Lymphocyte antigen 6D (127 aa).

The signal sequence occupies residues 1–20; that stretch reads MKTALLVLLVLAVATSPAWA. The UPAR/Ly6 domain occupies 21-108; it reads LRCHVCTNSA…AAPGHALLSS (88 aa). 5 disulfide bridges follow: Cys23–Cys45, Cys26–Cys32, Cys38–Cys63, Cys67–Cys86, and Cys87–Cys92. Ser98 carries the GPI-anchor amidated serine lipid modification. Residues 99–127 constitute a propeptide, removed in mature form; that stretch reads AAPGHALLSSVTLGLATSLSLLTVMALCL.

Lymphoid cells lacking Ly6d, called ALP (all-lymphoid progenitor), retain full lymphoid potential and early thymic seeding activity, whereas cells containing Ly6d, called BLP (B-cell-biased lymphoid progenitor), up-regulate the B-cell specifying factors Ebf1 and Pax5 and behave essentially as B-cell progenitors (at protein level). Thymocytes and B-cells.

The protein localises to the cell membrane. Its function is as follows. May act as a specification marker at earliest stage specification of lymphocytes between B- and T-cell development. Marks the earliest stage of B-cell specification. The chain is Lymphocyte antigen 6D (Ly6d) from Mus musculus (Mouse).